The sequence spans 130 residues: MVLTLSNQFLAKIPATPKTLTLPKTSSSTLRPQWSCRKSDIHPEFREDAKVYCNGELVMTTGGTQKDYTVEVWSGNHPFYLGNRSALLLDADQVEKFRKKYGELTQIMEIPVLKGEIILPPKKKSKAKKK.

The transit peptide at 1–36 directs the protein to the chloroplast; it reads MVLTLSNQFLAKIPATPKTLTLPKTSSSTLRPQWSC.

This sequence belongs to the bacterial ribosomal protein bL31 family. Type A subfamily. As to quaternary structure, component of the chloroplast large ribosomal subunit (LSU). Mature 70S chloroplast ribosomes of higher plants consist of a small (30S) and a large (50S) subunit. The 30S small subunit contains 1 molecule of ribosomal RNA (16S rRNA) and 24 different proteins. The 50S large subunit contains 3 rRNA molecules (23S, 5S and 4.5S rRNA) and 33 different proteins.

Its subcellular location is the plastid. The protein resides in the chloroplast. In terms of biological role, component of the chloroplast ribosome (chloro-ribosome), a dedicated translation machinery responsible for the synthesis of chloroplast genome-encoded proteins, including proteins of the transcription and translation machinery and components of the photosynthetic apparatus. This chain is Large ribosomal subunit protein bL31c (RPL31), found in Spinacia oleracea (Spinach).